Reading from the N-terminus, the 370-residue chain is MYKLNKKVIVAMSGGVDSSVTAWILKKKGYHVEGLFMKNWEEHNSDSDMHCSSKKDLSDAQGVCNQLNIFLHKVNFSFEYWENVFQKFLFEYKMGRTPNPDVLCNKEIKFKIFFEYSIQDLQAHYIATGHYVQKRIFKNKYFLLRGLDATKDQSYFLYTINQKVLKQCLFPIGHLTKCEVRKIARRINLIVAKKKDSTGICFISPQNIKKFLNHYLPHKSGNIITTLGQKIGQHYGLIHYTIGQRRGLGIGGIKGFNNIPWYVVSKDITNNSLIVSQGMNNFYLMSIGLIANELHWINDINIQNSFFCTAKIRYRHIDIPCKIVMHKKKQIKVLFERPESSVAPGQSVVFYLSDLCLGGGIIKKRLPVLK.

ATP is bound by residues 11–18 and Met-37; that span reads AMSGGVDS. The tract at residues 99–101 is interaction with target base in tRNA; sequence NPD. The active-site Nucleophile is the Cys-104. A disulfide bridge connects residues Cys-104 and Cys-201. Residue Gly-129 coordinates ATP. Residues 151 to 153 are interaction with tRNA; sequence KDQ. Catalysis depends on Cys-201, which acts as the Cysteine persulfide intermediate. Positions 313-314 are interaction with tRNA; it reads RY.

The protein belongs to the MnmA/TRMU family. In terms of assembly, interacts with TusE.

Its subcellular location is the cytoplasm. It carries out the reaction S-sulfanyl-L-cysteinyl-[protein] + uridine(34) in tRNA + AH2 + ATP = 2-thiouridine(34) in tRNA + L-cysteinyl-[protein] + A + AMP + diphosphate + H(+). Its function is as follows. Catalyzes the 2-thiolation of uridine at the wobble position (U34) of tRNA(Lys), tRNA(Glu) and tRNA(Gln), leading to the formation of s(2)U34, the first step of tRNA-mnm(5)s(2)U34 synthesis. Sulfur is provided by IscS, via a sulfur-relay system. Binds ATP and its substrate tRNAs. The chain is tRNA-specific 2-thiouridylase MnmA from Buchnera aphidicola subsp. Baizongia pistaciae (strain Bp).